Here is a 235-residue protein sequence, read N- to C-terminus: 5'-methylthioadenosine/S-adenosylhomocysteine nucleosidase (235 aa).

Residue Glu13 is the Proton acceptor of the active site. Substrate-binding positions include Gly79, Met154, and Met175–Glu176. The active-site Proton donor is Asp199.

Belongs to the PNP/UDP phosphorylase family. MtnN subfamily.

It carries out the reaction S-adenosyl-L-homocysteine + H2O = S-(5-deoxy-D-ribos-5-yl)-L-homocysteine + adenine. The enzyme catalyses S-methyl-5'-thioadenosine + H2O = 5-(methylsulfanyl)-D-ribose + adenine. The catalysed reaction is 5'-deoxyadenosine + H2O = 5-deoxy-D-ribose + adenine. It participates in amino-acid biosynthesis; L-methionine biosynthesis via salvage pathway; S-methyl-5-thio-alpha-D-ribose 1-phosphate from S-methyl-5'-thioadenosine (hydrolase route): step 1/2. In terms of biological role, catalyzes the irreversible cleavage of the glycosidic bond in both 5'-methylthioadenosine (MTA) and S-adenosylhomocysteine (SAH/AdoHcy) to adenine and the corresponding thioribose, 5'-methylthioribose and S-ribosylhomocysteine, respectively. Also cleaves 5'-deoxyadenosine, a toxic by-product of radical S-adenosylmethionine (SAM) enzymes, into 5-deoxyribose and adenine. In Chromohalobacter salexigens (strain ATCC BAA-138 / DSM 3043 / CIP 106854 / NCIMB 13768 / 1H11), this protein is 5'-methylthioadenosine/S-adenosylhomocysteine nucleosidase.